The primary structure comprises 404 residues: Cysteine desulfurase IscS (404 aa).

Residues Ala-75–Thr-76, Asn-155, Gln-183, and Ser-203–His-205 contribute to the pyridoxal 5'-phosphate site. Lys-206 carries the post-translational modification N6-(pyridoxal phosphate)lysine. Thr-243 lines the pyridoxal 5'-phosphate pocket. Cys-328 (cysteine persulfide intermediate) is an active-site residue. Cys-328 provides a ligand contact to [2Fe-2S] cluster.

It belongs to the class-V pyridoxal-phosphate-dependent aminotransferase family. NifS/IscS subfamily. In terms of assembly, homodimer. Forms a heterotetramer with IscU, interacts with other sulfur acceptors. Pyridoxal 5'-phosphate serves as cofactor.

It is found in the cytoplasm. The catalysed reaction is (sulfur carrier)-H + L-cysteine = (sulfur carrier)-SH + L-alanine. Its pathway is cofactor biosynthesis; iron-sulfur cluster biosynthesis. Its function is as follows. Master enzyme that delivers sulfur to a number of partners involved in Fe-S cluster assembly, tRNA modification or cofactor biosynthesis. Catalyzes the removal of elemental sulfur atoms from cysteine to produce alanine. Functions as a sulfur delivery protein for Fe-S cluster synthesis onto IscU, an Fe-S scaffold assembly protein, as well as other S acceptor proteins. The chain is Cysteine desulfurase IscS from Shewanella sediminis (strain HAW-EB3).